Consider the following 203-residue polypeptide: Peptide deformylase (203 aa).

Positions 130 and 173 each coordinate Fe cation. Glu-174 is an active-site residue. Residue His-177 coordinates Fe cation.

The protein belongs to the polypeptide deformylase family. Requires Fe(2+) as cofactor.

The catalysed reaction is N-terminal N-formyl-L-methionyl-[peptide] + H2O = N-terminal L-methionyl-[peptide] + formate. Functionally, removes the formyl group from the N-terminal Met of newly synthesized proteins. Requires at least a dipeptide for an efficient rate of reaction. N-terminal L-methionine is a prerequisite for activity but the enzyme has broad specificity at other positions. The protein is Peptide deformylase of Streptococcus pneumoniae serotype 19F (strain G54).